A 200-amino-acid polypeptide reads, in one-letter code: Probable molybdenum cofactor guanylyltransferase (200 aa).

GTP contacts are provided by residues 9 to 11 (LAG), K21, D69, and D100. Position 100 (D100) interacts with Mg(2+).

It belongs to the MobA family. It depends on Mg(2+) as a cofactor.

It localises to the cytoplasm. It carries out the reaction Mo-molybdopterin + GTP + H(+) = Mo-molybdopterin guanine dinucleotide + diphosphate. Transfers a GMP moiety from GTP to Mo-molybdopterin (Mo-MPT) cofactor (Moco or molybdenum cofactor) to form Mo-molybdopterin guanine dinucleotide (Mo-MGD) cofactor. This Bacillus cereus (strain AH187) protein is Probable molybdenum cofactor guanylyltransferase.